Here is a 194-residue protein sequence, read N- to C-terminus: Ribosome maturation factor RimM (194 aa).

The PRC barrel domain maps to 113-194 (DGEYYWIDLI…RIVADWGLDY (82 aa)).

It belongs to the RimM family. In terms of assembly, binds ribosomal protein uS19.

The protein resides in the cytoplasm. An accessory protein needed during the final step in the assembly of 30S ribosomal subunit, possibly for assembly of the head region. Essential for efficient processing of 16S rRNA. May be needed both before and after RbfA during the maturation of 16S rRNA. It has affinity for free ribosomal 30S subunits but not for 70S ribosomes. The sequence is that of Ribosome maturation factor RimM from Leptothrix cholodnii (strain ATCC 51168 / LMG 8142 / SP-6) (Leptothrix discophora (strain SP-6)).